Here is a 237-residue protein sequence, read N- to C-terminus: tRNA (guanine-N(7)-)-methyltransferase (237 aa).

S-adenosyl-L-methionine-binding residues include E68, E93, D120, and D143. The active site involves D143. Substrate-binding positions include K147, D179, and 216–219 (TKFE).

Belongs to the class I-like SAM-binding methyltransferase superfamily. TrmB family.

The enzyme catalyses guanosine(46) in tRNA + S-adenosyl-L-methionine = N(7)-methylguanosine(46) in tRNA + S-adenosyl-L-homocysteine. The protein operates within tRNA modification; N(7)-methylguanine-tRNA biosynthesis. In terms of biological role, catalyzes the formation of N(7)-methylguanine at position 46 (m7G46) in tRNA. The protein is tRNA (guanine-N(7)-)-methyltransferase of Shewanella halifaxensis (strain HAW-EB4).